We begin with the raw amino-acid sequence, 691 residues long: DNA-directed RNA polymerase subunit beta' (691 aa).

It belongs to the RNA polymerase beta' chain family. RpoC1 subfamily. In plastids the minimal PEP RNA polymerase catalytic core is composed of four subunits: alpha, beta, beta', and beta''. When a (nuclear-encoded) sigma factor is associated with the core the holoenzyme is formed, which can initiate transcription.

Its subcellular location is the plastid. The catalysed reaction is RNA(n) + a ribonucleoside 5'-triphosphate = RNA(n+1) + diphosphate. DNA-dependent RNA polymerase catalyzes the transcription of DNA into RNA using the four ribonucleoside triphosphates as substrates. The polypeptide is DNA-directed RNA polymerase subunit beta' (rpoC1) (Cuscuta reflexa (Southern Asian dodder)).